The following is a 352-amino-acid chain: Zinc transporter 1 (352 aa).

The N-terminal stretch at 1–29 (MARTMTMRVSSLLVAVVLLAALSFQACSG) is a signal peptide. Residues 30-56 (HGGINDGDGQVDAPATPASSSGVRSKG) lie on the Extracellular side of the membrane. Residues 57–77 (LIAVKVWCLVILLVFTFAGGV) traverse the membrane as a helical segment. Topologically, residues 78-87 (SPYFYRWNES) are cytoplasmic. A helical membrane pass occupies residues 88–108 (FLLLGTQFAAGVFLGTALMHF). At 109 to 127 (LADSTSTFKGLTTNQYPFS) the chain is on the extracellular side. The chain crosses the membrane as a helical span at residues 128 to 148 (FMLTCVGFLLTMLSDLVIAAV). Over 149-200 (ARRSAAAGVSDNQVSEQQQRQQAEGAVMSRKEEEAAAVAHPAMLVRTSSFED) the chain is Cytoplasmic. A helical transmembrane segment spans residues 201–221 (AVLLIVALCFHSVFEGIAIGV). Topologically, residues 222–230 (SASKSEAWR) are extracellular. Residues 231–251 (NLWTIGLHKIFAAVAMGIALL) traverse the membrane as a helical segment. Residues 252–262 (RMIPKRPFLMT) are Cytoplasmic-facing. The chain crosses the membrane as a helical span at residues 263-283 (VVYSLAFAVSSPVGVGIGIAI). Topologically, residues 284-296 (DATSQGRAADWTY) are extracellular. The helical transmembrane segment at 297–317 (AISMGLATGVFIYVAINHLIA) threads the bilayer. The Cytoplasmic segment spans residues 318–330 (KGYRPHHPTAADK). Residues 331–351 (PLFKFLAVLLGVAVMAVVMIW) traverse the membrane as a helical segment. Position 352 (Asp-352) is a topological domain, extracellular.

Belongs to the ZIP transporter (TC 2.A.5) family. In terms of tissue distribution, expressed in vascular bundles of roots and leaves.

The protein localises to the cell membrane. Zinc transporter that may mediate zinc uptake from the rhizosphere. May also transport other divalent cations. In Oryza sativa subsp. japonica (Rice), this protein is Zinc transporter 1 (ZIP1).